We begin with the raw amino-acid sequence, 520 residues long: GMP synthase [glutamine-hydrolyzing] (520 aa).

In terms of domain architecture, Glutamine amidotransferase type-1 spans 9-202 (TVLIVDFGSQ…VHNIAGIEGD (194 aa)). Catalysis depends on C86, which acts as the Nucleophile. Catalysis depends on residues H176 and E178. The 193-residue stretch at 203–395 (WTMRAYREHA…LGLPESFIGR (193 aa)) folds into the GMPS ATP-PPase domain. 230–236 (SGGVDSS) contributes to the ATP binding site.

As to quaternary structure, homodimer.

The enzyme catalyses XMP + L-glutamine + ATP + H2O = GMP + L-glutamate + AMP + diphosphate + 2 H(+). It functions in the pathway purine metabolism; GMP biosynthesis; GMP from XMP (L-Gln route): step 1/1. Its function is as follows. Catalyzes the synthesis of GMP from XMP. The polypeptide is GMP synthase [glutamine-hydrolyzing] (Mesorhizobium japonicum (strain LMG 29417 / CECT 9101 / MAFF 303099) (Mesorhizobium loti (strain MAFF 303099))).